Consider the following 132-residue polypeptide: Small ribosomal subunit protein uS8c (132 aa).

Belongs to the universal ribosomal protein uS8 family. In terms of assembly, part of the 30S ribosomal subunit.

Its subcellular location is the plastid. The protein localises to the chloroplast. One of the primary rRNA binding proteins, it binds directly to 16S rRNA central domain where it helps coordinate assembly of the platform of the 30S subunit. The polypeptide is Small ribosomal subunit protein uS8c (rps8) (Zygnema circumcarinatum (Green alga)).